The following is a 228-amino-acid chain: Orotidine 5'-phosphate decarboxylase (228 aa).

Substrate-binding positions include Asp10, Lys33, 60–69, Thr116, Arg178, Gln187, Gly207, and Arg208; that span reads DLKLYDIPHT. Lys62 (proton donor) is an active-site residue.

It belongs to the OMP decarboxylase family. Type 1 subfamily. As to quaternary structure, homodimer.

The catalysed reaction is orotidine 5'-phosphate + H(+) = UMP + CO2. It participates in pyrimidine metabolism; UMP biosynthesis via de novo pathway; UMP from orotate: step 2/2. In terms of biological role, catalyzes the decarboxylation of orotidine 5'-monophosphate (OMP) to uridine 5'-monophosphate (UMP). In Oenococcus oeni (strain ATCC BAA-331 / PSU-1), this protein is Orotidine 5'-phosphate decarboxylase.